Reading from the N-terminus, the 463-residue chain is Argininosuccinate lyase (463 aa).

This sequence belongs to the lyase 1 family. Argininosuccinate lyase subfamily.

It localises to the cytoplasm. The enzyme catalyses 2-(N(omega)-L-arginino)succinate = fumarate + L-arginine. Its pathway is amino-acid biosynthesis; L-arginine biosynthesis; L-arginine from L-ornithine and carbamoyl phosphate: step 3/3. The chain is Argininosuccinate lyase from Staphylococcus epidermidis (strain ATCC 35984 / DSM 28319 / BCRC 17069 / CCUG 31568 / BM 3577 / RP62A).